The sequence spans 293 residues: Pyridoxal 5'-phosphate synthase subunit PdxS (293 aa).

D25 contributes to the D-ribose 5-phosphate binding site. The active-site Schiff-base intermediate with D-ribose 5-phosphate is the K82. G154 is a binding site for D-ribose 5-phosphate. Residue R166 coordinates D-glyceraldehyde 3-phosphate. Residues G215 and 236–237 contribute to the D-ribose 5-phosphate site; that span reads GS.

The protein belongs to the PdxS/SNZ family. As to quaternary structure, in the presence of PdxT, forms a dodecamer of heterodimers.

It carries out the reaction aldehydo-D-ribose 5-phosphate + D-glyceraldehyde 3-phosphate + L-glutamine = pyridoxal 5'-phosphate + L-glutamate + phosphate + 3 H2O + H(+). The protein operates within cofactor biosynthesis; pyridoxal 5'-phosphate biosynthesis. Its function is as follows. Catalyzes the formation of pyridoxal 5'-phosphate from ribose 5-phosphate (RBP), glyceraldehyde 3-phosphate (G3P) and ammonia. The ammonia is provided by the PdxT subunit. Can also use ribulose 5-phosphate and dihydroxyacetone phosphate as substrates, resulting from enzyme-catalyzed isomerization of RBP and G3P, respectively. This chain is Pyridoxal 5'-phosphate synthase subunit PdxS, found in Thermotoga petrophila (strain ATCC BAA-488 / DSM 13995 / JCM 10881 / RKU-1).